A 629-amino-acid polypeptide reads, in one-letter code: tRNA uridine 5-carboxymethylaminomethyl modification enzyme MnmG (629 aa).

13–18 (GGGHAG) serves as a coordination point for FAD. 273–287 (GPRYCPSIEDKITRF) is an NAD(+) binding site.

The protein belongs to the MnmG family. In terms of assembly, homodimer. Heterotetramer of two MnmE and two MnmG subunits. FAD serves as cofactor.

It localises to the cytoplasm. Its function is as follows. NAD-binding protein involved in the addition of a carboxymethylaminomethyl (cmnm) group at the wobble position (U34) of certain tRNAs, forming tRNA-cmnm(5)s(2)U34. This Aeromonas salmonicida (strain A449) protein is tRNA uridine 5-carboxymethylaminomethyl modification enzyme MnmG.